Consider the following 596-residue polypeptide: Cytochrome P450 monooxygenase FUM15 (596 aa).

Residues 476–512 are disordered; it reads DRWLSPKNGNREATEQSKFKIGNQKRDSTAAPEVTQE. A compositionally biased stretch (basic and acidic residues) spans 484–503; sequence GNREATEQSKFKIGNQKRDS. A heme-binding site is contributed by Cys-536.

This sequence belongs to the cytochrome P450 family. Heme is required as a cofactor.

Its subcellular location is the endoplasmic reticulum. It functions in the pathway secondary metabolite biosynthesis. Functionally, cytochrome P450 monooxygenase; part of the gene cluster that mediates the biosynthesis of fumonisins B1 (FB1), B2 (FB2), B3 (FB3), and B4 (FB4), which are carcinogenic mycotoxins. Within the pathway, FUM15 may be responsible for the hydroxylations at positions C-14 and/or C-15. Also plays a role in self-protection from FB1 toxicity, probably through derivatization of FB1, and may contribute to ceramide biosynthesis. The biosynthesis starts with the FUM1-catalyzed carbon chain assembly from one molecule of acetyl-CoA, eight molecules of malonyl-CoA, and two molecules of methionine (in S-adenosyl form). The C18 polyketide chain is released from the enzyme by a nucleophilic attack of a carbanion, which is derived from R-carbon of alanine by decarboxylation, on the carbonyl carbon of polyketide acyl chain. This step is catalyzed by the pyridoxal 5'-phosphate-dependent aminoacyl transferase FUM8. The resultant 3-keto intermediate is then stereospecifically reduced to a 3-hydroxyl product by reductase FUM13. Subsequent oxidations at C-10 by the cytochrome P450 monooxygenase FUM2, C-14 and C-15 by FUM6, FUM12 or FUM15, tricarballylic esterification of the hydroxyl groups on C-14 and C-15 by acyltransferase FUM14, and C-5 hydroxylation by 2-keto-glutarate-dependent dioxygenase FUM3 furnish the biosynthesis of fumonisins. The tricarballylic moieties are most likely derived from the citric acid cycle, and their addition to the carbon backbone may involve FUM7, FUM10, FUM11 and FUM14. The chain is Cytochrome P450 monooxygenase FUM15 from Gibberella moniliformis (strain M3125 / FGSC 7600) (Maize ear and stalk rot fungus).